Reading from the N-terminus, the 190-residue chain is Histone-arginine methyltransferase METTL23 (190 aa).

Belongs to the methyltransferase superfamily. METTL23 family. In terms of assembly, interacts with HSPA5, HSP90B1, TUBULIN, UGGT1 and UGGT2. Interacts with TET3. Interacts with STPG4.

Its subcellular location is the nucleus. The protein resides in the cytoplasm. It catalyses the reaction L-arginyl-[protein] + 2 S-adenosyl-L-methionine = N(omega),N(omega)-dimethyl-L-arginyl-[protein] + 2 S-adenosyl-L-homocysteine + 2 H(+). Functionally, histone methyltransferase that dimethylates histone H3 at 'Arg-17', forming asymmetric dimethylarginine (H3R17me2a), leading to activate transcription via chromatin remodeling. Maternal factor involved in epigenetic chromatin reprogramming of the paternal genome in the zygote: mediates H3R17me2a, promoting histone H3.3 incorporation in the male pronucleus, leading to TET3 recruitment and subsequent DNA demethylation. The polypeptide is Histone-arginine methyltransferase METTL23 (Homo sapiens (Human)).